The sequence spans 505 residues: Protein ERGIC-53-like (505 aa).

The N-terminal stretch at 1–25 is a signal peptide; sequence MLEIRGLSPSLCLLSLLLVLHGAER. Over 26–438 the chain is Lumenal; it reads SQPPPRRRFE…SGWLLGSSTC (413 aa). The L-type lectin-like domain maps to 32–254; sequence RRFEYKLSFK…DVLSFLTFSL (223 aa). Asn-84 is a glycosylation site (N-linked (GlcNAc...) asparagine). The cysteines at positions 177 and 216 are disulfide-linked. A helical membrane pass occupies residues 439–459; that stretch reads LHTSIFLFFLLLQTVGFFCYV. Topologically, residues 460-505 are cytoplasmic; it reads NFSRQELDKRLQEYLSTGSLSLEPALPITRTIGVLRRQPISPSMQA.

The protein resides in the endoplasmic reticulum-Golgi intermediate compartment membrane. The chain is Protein ERGIC-53-like (Lman1l) from Mus musculus (Mouse).